The following is a 99-amino-acid chain: Acylphosphatase (99 aa).

The Acylphosphatase-like domain maps to 5-97 (ILQVMIRGRV…RAGEKFSVLP (93 aa)). Catalysis depends on residues Arg-20 and Asn-38.

This sequence belongs to the acylphosphatase family.

It catalyses the reaction an acyl phosphate + H2O = a carboxylate + phosphate + H(+). This chain is Acylphosphatase (acyP), found in Bradyrhizobium diazoefficiens (strain JCM 10833 / BCRC 13528 / IAM 13628 / NBRC 14792 / USDA 110).